A 164-amino-acid polypeptide reads, in one-letter code: Crossover junction endodeoxyribonuclease RuvC (164 aa).

Active-site residues include D7, E67, and D139. Mg(2+)-binding residues include D7, E67, and D139.

The protein belongs to the RuvC family. Homodimer which binds Holliday junction (HJ) DNA. The HJ becomes 2-fold symmetrical on binding to RuvC with unstacked arms; it has a different conformation from HJ DNA in complex with RuvA. In the full resolvosome a probable DNA-RuvA(4)-RuvB(12)-RuvC(2) complex forms which resolves the HJ. Mg(2+) serves as cofactor.

It is found in the cytoplasm. The catalysed reaction is Endonucleolytic cleavage at a junction such as a reciprocal single-stranded crossover between two homologous DNA duplexes (Holliday junction).. Functionally, the RuvA-RuvB-RuvC complex processes Holliday junction (HJ) DNA during genetic recombination and DNA repair. Endonuclease that resolves HJ intermediates. Cleaves cruciform DNA by making single-stranded nicks across the HJ at symmetrical positions within the homologous arms, yielding a 5'-phosphate and a 3'-hydroxyl group; requires a central core of homology in the junction. The consensus cleavage sequence is 5'-(A/T)TT(C/G)-3'. Cleavage occurs on the 3'-side of the TT dinucleotide at the point of strand exchange. HJ branch migration catalyzed by RuvA-RuvB allows RuvC to scan DNA until it finds its consensus sequence, where it cleaves and resolves the cruciform DNA. This Geobacter sp. (strain M21) protein is Crossover junction endodeoxyribonuclease RuvC.